The chain runs to 882 residues: HTH-type transcriptional regulator AlkS (882 aa).

An ATP-binding site is contributed by 51–58 (APPGYGKT). The HTH luxR-type domain maps to 815–880 (ENKADALLTR…QATIEAERQG (66 aa)). A DNA-binding region (H-T-H motif) is located at residues 839–858 (NKQIATNMHVTEDAIKWHMR).

It participates in hydrocarbon metabolism; alkane degradation. In terms of biological role, this protein activates the expression of alkBFGHJKL operon in the presence of alkanes. The chain is HTH-type transcriptional regulator AlkS (alkS) from Ectopseudomonas oleovorans (Pseudomonas oleovorans).